The sequence spans 330 residues: Quinone oxidoreductase (330 aa).

Ala-2 is subject to N-acetylalanine. Lys-23 carries the N6-acetyllysine modification. NADP(+) is bound by residues Tyr-53, 158 to 161, Gly-181, His-200, Asn-229, 246 to 249, and 269 to 271; these read SGGV, VGSK, and VTL. A Phosphoserine modification is found at Ser-248.

Belongs to the zinc-containing alcohol dehydrogenase family. Quinone oxidoreductase subfamily. In terms of assembly, homotetramer.

It localises to the cytoplasm. The catalysed reaction is 2 a quinone + NADPH + H(+) = 2 a 1,4-benzosemiquinone + NADP(+). Functionally, does not have alcohol dehydrogenase activity. Binds NADP and acts through a one-electron transfer process. Orthoquinones, such as 1,2-naphthoquinone or 9,10-phenanthrenequinone, are the best substrates (in vitro). May act in the detoxification of xenobiotics. Interacts with (AU)-rich elements (ARE) in the 3'-UTR of target mRNA species and enhances their stability. NADPH binding interferes with mRNA binding. This is Quinone oxidoreductase (CRYZ) from Lama guanicoe (Guanaco).